The primary structure comprises 256 residues: Acetyl-coenzyme A carboxylase carboxyl transferase subunit alpha (256 aa).

The 236-residue stretch at 1–236 (MTDVSRVLKE…KANLIEQITS (236 aa)) folds into the CoA carboxyltransferase C-terminal domain.

The protein belongs to the AccA family. Acetyl-CoA carboxylase is a heterohexamer composed of biotin carboxyl carrier protein (AccB), biotin carboxylase (AccC) and two subunits each of ACCase subunit alpha (AccA) and ACCase subunit beta (AccD).

The protein localises to the cytoplasm. The enzyme catalyses N(6)-carboxybiotinyl-L-lysyl-[protein] + acetyl-CoA = N(6)-biotinyl-L-lysyl-[protein] + malonyl-CoA. It functions in the pathway lipid metabolism; malonyl-CoA biosynthesis; malonyl-CoA from acetyl-CoA: step 1/1. Functionally, component of the acetyl coenzyme A carboxylase (ACC) complex. First, biotin carboxylase catalyzes the carboxylation of biotin on its carrier protein (BCCP) and then the CO(2) group is transferred by the carboxyltransferase to acetyl-CoA to form malonyl-CoA. This Streptococcus pyogenes serotype M2 (strain MGAS10270) protein is Acetyl-coenzyme A carboxylase carboxyl transferase subunit alpha.